Reading from the N-terminus, the 596-residue chain is Adenine deaminase (596 aa).

The protein belongs to the metallo-dependent hydrolases superfamily. Adenine deaminase family. Requires Mn(2+) as cofactor.

It carries out the reaction adenine + H2O + H(+) = hypoxanthine + NH4(+). This is Adenine deaminase from Moorella thermoacetica (strain ATCC 39073 / JCM 9320).